A 563-amino-acid polypeptide reads, in one-letter code: MDYKQIVTAALSDALAGQLTRDEIASKLERPKTSDKGDMAFPTFTLAKLLHQAPQQIAQDLAEKLDKTSFEKVEVVGPYLNFFFDKGAYSAETLQTVLTAGADYGQNDDGQGGNVPIDMSSPNIAKPMSMGHLRSTVIGNSIAEILTKNGYHPIKDNHLGDWGTQFGKLITAYKLWGNEADVKADPINKLVEYYVRFHKEDVDKPELDDTAREWFRKLENGDEEAHELWQWFRDASLQEFNDVYEKLGVTFDTFNGEAFYNDKLEEVVQILKDKNLLVESQGAQVVDLSKYNLNPALILKSDGASLYITRDIATALYRDRTYHPAKNLYVVGSEQTYYFKQLKAVLQEMGVPSADDLEHIPFGLITVDGKKLSTRSGRIILLAKVLDDSVKLAAEEINEKNPDLANKDEVAQQVGVGAIVFGDLKNERTNNIDFVLADQLKFEGETGPYVQYSHARAESILRKAGKVTITTDGNQISDPEAWDTIKTLADFPAMVKMACDEFEPSVIAKYAIRLAKTFNKYYAHSKILTEDAELPARLALVKAVSTVLKESLRLLGVQAPDEM.

The 'HIGH' region signature appears at 122 to 132 (PNIAKPMSMGH).

The protein belongs to the class-I aminoacyl-tRNA synthetase family. Monomer.

The protein localises to the cytoplasm. It carries out the reaction tRNA(Arg) + L-arginine + ATP = L-arginyl-tRNA(Arg) + AMP + diphosphate. This is Arginine--tRNA ligase from Levilactobacillus brevis (strain ATCC 367 / BCRC 12310 / CIP 105137 / JCM 1170 / LMG 11437 / NCIMB 947 / NCTC 947) (Lactobacillus brevis).